The following is a 192-amino-acid chain: Imidazole glycerol phosphate synthase subunit HisH (192 aa).

The Glutamine amidotransferase type-1 domain maps to 1–192 (MIAIIDYGLG…QALKGGFIND (192 aa)). Cys-77 functions as the Nucleophile in the catalytic mechanism. Active-site residues include His-169 and Glu-171.

As to quaternary structure, heterodimer of HisH and HisF.

It localises to the cytoplasm. The catalysed reaction is 5-[(5-phospho-1-deoxy-D-ribulos-1-ylimino)methylamino]-1-(5-phospho-beta-D-ribosyl)imidazole-4-carboxamide + L-glutamine = D-erythro-1-(imidazol-4-yl)glycerol 3-phosphate + 5-amino-1-(5-phospho-beta-D-ribosyl)imidazole-4-carboxamide + L-glutamate + H(+). The enzyme catalyses L-glutamine + H2O = L-glutamate + NH4(+). The protein operates within amino-acid biosynthesis; L-histidine biosynthesis; L-histidine from 5-phospho-alpha-D-ribose 1-diphosphate: step 5/9. Functionally, IGPS catalyzes the conversion of PRFAR and glutamine to IGP, AICAR and glutamate. The HisH subunit catalyzes the hydrolysis of glutamine to glutamate and ammonia as part of the synthesis of IGP and AICAR. The resulting ammonia molecule is channeled to the active site of HisF. The chain is Imidazole glycerol phosphate synthase subunit HisH from Staphylococcus epidermidis (strain ATCC 12228 / FDA PCI 1200).